Reading from the N-terminus, the 492-residue chain is Cysteine--tRNA ligase (492 aa).

Residue Cys27 coordinates Zn(2+). Positions 29–39 (VTVYDLCHLGH) match the 'HIGH' region motif. Residues Cys211, His236, and Glu240 each contribute to the Zn(2+) site. Positions 268-272 (KMSKS) match the 'KMSKS' region motif. ATP is bound at residue Lys271.

The protein belongs to the class-I aminoacyl-tRNA synthetase family. As to quaternary structure, monomer. Zn(2+) is required as a cofactor.

It is found in the cytoplasm. It carries out the reaction tRNA(Cys) + L-cysteine + ATP = L-cysteinyl-tRNA(Cys) + AMP + diphosphate. The sequence is that of Cysteine--tRNA ligase from Prochlorococcus marinus (strain MIT 9515).